The following is a 394-amino-acid chain: MAAPSPGPREVLAPSPEAGCRAVTSSRRGLLWRLRDKQSRLGLFEISPGHELHGMTCMMQAGLWAATQVSMDHPPTGPPSRDDFSEVLTQVHEGFELGTLAGPAFAWLRRSLGLAEEDYQAALGPGGPYLQFLSTSKSKASFFLSHDQRFFLKTQGRREVQALLAHLPRYVQHLQRHPHSLLARLLGVHSLRVDRGKKTYFIVMQSVFYPAGRISERYDIKGCEVSRWVDPAPEGSPLVLVLKDLNFQGKTINLGPQRSWFLRQMELDTTFLRELNVLDYSLLIAFQRLHEDERGPGSSLIFRTARSVQGAQSPEESRAQNRRLLPDAPNALHILDGPEQRYFLGVVDLATVYGLRKRLEHLWKTLRYPGRTFSTVSPARYARRLCQWVEAHTE.

The PIPK domain maps to 36–393; sequence DKQSRLGLFE…RLCQWVEAHT (358 aa).

As to quaternary structure, heterodimerizes with other type I phosphatidylinositol 4-phosphate 5-kinase.

The protein resides in the cytoplasm. It localises to the membrane. It catalyses the reaction a 1,2-diacyl-sn-glycero-3-phospho-(1D-myo-inositol 4-phosphate) + ATP = a 1,2-diacyl-sn-glycero-3-phospho-(1D-myo-inositol-4,5-bisphosphate) + ADP + H(+). Its function is as follows. May act as a scaffold to localize and regulate type I PI(4)P 5-kinases to specific compartments within the cell, where they generate PI(4,5)P2 for actin nucleation, signaling and scaffold protein recruitment and conversion to PI(3,4,5)P3. In Homo sapiens (Human), this protein is Phosphatidylinositol 4-phosphate 5-kinase-like protein 1 (PIP5KL1).